The chain runs to 985 residues: Ephrin type-B receptor 1-A (985 aa).

The first 19 residues, 1 to 19 (MELNVLLLLLCLSGGQVGA), serve as a signal peptide directing secretion. The Extracellular segment spans residues 20–542 (VEETLMDTRT…YKSELREQLP (523 aa)). Positions 21-203 (EETLMDTRTA…FFKEMPSVVQ (183 aa)) constitute an Eph LBD domain. Fibronectin type-III domains are found at residues 324 to 434 (VPSG…TNQA) and 435 to 532 (APSS…TAED). 3 N-linked (GlcNAc...) asparagine glycosylation sites follow: Asn-336, Asn-428, and Asn-482. The helical transmembrane segment at 543-563 (LTGSAAAGVVFIVSLVAISIV) threads the bilayer. Topologically, residues 564 to 985 (CSRKRTYSKE…QITQSPTSIA (422 aa)) are cytoplasmic. The Protein kinase domain occupies 620-883 (VKIEEVIGAG…EIVNTLRPMI (264 aa)). ATP is bound by residues 626 to 634 (IGAGEFGEV) and Lys-652. Asp-745 serves as the catalytic Proton acceptor. One can recognise an SAM domain in the interval 912 to 976 (SAFTSVDDWL…LNSIQSMRVQ (65 aa)). Residues 983 to 985 (SIA) carry the PDZ-binding motif.

The protein belongs to the protein kinase superfamily. Tyr protein kinase family. Ephrin receptor subfamily. Heterotetramer upon binding of the ligand. The heterotetramer is composed of an ephrin dimer and a receptor dimer. Oligomerization is probably required to induce biological responses. Post-translationally, phosphorylated. Autophosphorylation is stimulated by ligands.

The protein resides in the cell membrane. Its subcellular location is the early endosome membrane. The protein localises to the cell projection. It localises to the dendrite. It catalyses the reaction L-tyrosyl-[protein] + ATP = O-phospho-L-tyrosyl-[protein] + ADP + H(+). Functionally, receptor tyrosine kinase which binds promiscuously transmembrane ephrin-B family ligands residing on adjacent cells, leading to contact-dependent bidirectional signaling into neighboring cells. The signaling pathway downstream of the receptor is referred to as forward signaling while the signaling pathway downstream of the ephrin ligand is referred to as reverse signaling. May play a role in axon guidance during nervous system development. May also play an important redundant role with other ephrin-B receptors in development and maturation of dendritic spines and synapse formation. More generally, may play a role in targeted cell migration and adhesion. Upon activation by ephrin-B ligands activates the MAPK/ERK and the JNK signaling cascades to regulate cell migration and adhesion respectively. The chain is Ephrin type-B receptor 1-A (ephb1-a) from Xenopus laevis (African clawed frog).